A 533-amino-acid chain; its full sequence is (E)-beta-farnesene synthase (533 aa).

The Mg(2+) site is built by Asp286, Asp290, Asn430, Ser434, and Glu438. Positions 286–290 (DDMMD) match the DDXXD motif motif.

This sequence belongs to the terpene synthase family. It depends on Mg(2+) as a cofactor. Requires Co(2+) as cofactor. Mn(2+) serves as cofactor.

The protein resides in the cytoplasm. It carries out the reaction (2E,6E)-farnesyl diphosphate = (E)-beta-farnesene + diphosphate. The protein operates within secondary metabolite biosynthesis; terpenoid biosynthesis. Functionally, sesquiterpene cyclase catalyzing the production of sixfold more beta-farnesene than alpha-bergamotene from farnesyl diphosphate. Involved in indirect defense by producing volatile signals attracting natural enemies of herbivores. The chain is (E)-beta-farnesene synthase from Zea perennis (Perennial teosinte).